The sequence spans 544 residues: Chaperonin GroEL (544 aa).

ATP contacts are provided by residues 29–32 (TLGP), 86–90 (DGTTT), Gly413, 476–478 (NAA), and Asp492.

It belongs to the chaperonin (HSP60) family. As to quaternary structure, forms a cylinder of 14 subunits composed of two heptameric rings stacked back-to-back. Interacts with the co-chaperonin GroES.

The protein resides in the cytoplasm. The enzyme catalyses ATP + H2O + a folded polypeptide = ADP + phosphate + an unfolded polypeptide.. Together with its co-chaperonin GroES, plays an essential role in assisting protein folding. The GroEL-GroES system forms a nano-cage that allows encapsulation of the non-native substrate proteins and provides a physical environment optimized to promote and accelerate protein folding. This chain is Chaperonin GroEL, found in Bacillus mycoides (strain KBAB4) (Bacillus weihenstephanensis).